Reading from the N-terminus, the 221-residue chain is Interleukin-12 subunit alpha (221 aa).

An N-terminal signal peptide occupies residues 1–25; that stretch reads MCPLRSLLLLSTLVLLHHLPHLSLG. Disulfide bonds link cysteine 39/cysteine 112, cysteine 66/cysteine 198, and cysteine 87/cysteine 125. N-linked (GlcNAc...) asparagine glycans are attached at residues asparagine 41 and asparagine 95.

The protein belongs to the IL-6 superfamily. Heterodimer with IL12B; disulfide-linked. This heterodimer is known as interleukin IL-12. Heterodimer with EBI3/IL27B; not disulfide-linked. This heterodimer is known as interleukin IL-35. Interacts with NBR1; this interaction promotes IL-12 secretion.

It localises to the secreted. Its function is as follows. Heterodimerizes with IL12B to form the IL-12 cytokine or with EBI3/IL27B to form the IL-35 cytokine. IL-12 is primarily produced by professional antigen-presenting cells (APCs) such as B-cells and dendritic cells (DCs) as well as macrophages and granulocytes and regulates T-cell and natural killer-cell responses, induces the production of interferon-gamma (IFN-gamma), favors the differentiation of T-helper 1 (Th1) cells and is an important link between innate resistance and adaptive immunity. Mechanistically, exerts its biological effects through a receptor composed of IL12R1 and IL12R2 subunits. Binding to the receptor results in the rapid tyrosine phosphorylation of a number of cellular substrates including the JAK family kinases TYK2 and JAK2. In turn, recruited STAT4 gets phosphorylated and translocates to the nucleus where it regulates cytokine/growth factor responsive genes. As part of IL-35, plays essential roles in maintaining the immune homeostasis of the liver microenvironment and also functions as an immune-suppressive cytokine. Mediates biological events through unconventional receptors composed of IL12RB2 and gp130/IL6ST heterodimers or homodimers. Signaling requires the transcription factors STAT1 and STAT4, which form a unique heterodimer that binds to distinct DNA sites. This chain is Interleukin-12 subunit alpha (IL12A), found in Cervus elaphus (Red deer).